The chain runs to 355 residues: Chorismate synthase (355 aa).

Arginine 48 contacts NADP(+). FMN contacts are provided by residues 126–128 (RSS), glycine 278, 293–297 (KPIPS), and arginine 319.

This sequence belongs to the chorismate synthase family. In terms of assembly, homotetramer. FMNH2 serves as cofactor.

The catalysed reaction is 5-O-(1-carboxyvinyl)-3-phosphoshikimate = chorismate + phosphate. Its pathway is metabolic intermediate biosynthesis; chorismate biosynthesis; chorismate from D-erythrose 4-phosphate and phosphoenolpyruvate: step 7/7. Catalyzes the anti-1,4-elimination of the C-3 phosphate and the C-6 proR hydrogen from 5-enolpyruvylshikimate-3-phosphate (EPSP) to yield chorismate, which is the branch point compound that serves as the starting substrate for the three terminal pathways of aromatic amino acid biosynthesis. This reaction introduces a second double bond into the aromatic ring system. The polypeptide is Chorismate synthase (Oleidesulfovibrio alaskensis (strain ATCC BAA-1058 / DSM 17464 / G20) (Desulfovibrio alaskensis)).